The chain runs to 313 residues: Ribosomal RNA small subunit methyltransferase H (313 aa).

S-adenosyl-L-methionine contacts are provided by residues 35 to 37 (GGH), aspartate 55, phenylalanine 79, aspartate 101, and glutamine 108.

This sequence belongs to the methyltransferase superfamily. RsmH family.

It is found in the cytoplasm. It catalyses the reaction cytidine(1402) in 16S rRNA + S-adenosyl-L-methionine = N(4)-methylcytidine(1402) in 16S rRNA + S-adenosyl-L-homocysteine + H(+). Its function is as follows. Specifically methylates the N4 position of cytidine in position 1402 (C1402) of 16S rRNA. The protein is Ribosomal RNA small subunit methyltransferase H of Klebsiella pneumoniae subsp. pneumoniae (strain ATCC 700721 / MGH 78578).